A 359-amino-acid polypeptide reads, in one-letter code: Phosphate acyltransferase (359 aa).

Residues 338–359 are disordered; the sequence is AGGVQSAPETEAPGAHPSPHVA.

This sequence belongs to the PlsX family. Homodimer. Probably interacts with PlsY.

Its subcellular location is the cytoplasm. It carries out the reaction a fatty acyl-[ACP] + phosphate = an acyl phosphate + holo-[ACP]. It functions in the pathway lipid metabolism; phospholipid metabolism. Functionally, catalyzes the reversible formation of acyl-phosphate (acyl-PO(4)) from acyl-[acyl-carrier-protein] (acyl-ACP). This enzyme utilizes acyl-ACP as fatty acyl donor, but not acyl-CoA. This is Phosphate acyltransferase from Cupriavidus taiwanensis (strain DSM 17343 / BCRC 17206 / CCUG 44338 / CIP 107171 / LMG 19424 / R1) (Ralstonia taiwanensis (strain LMG 19424)).